Reading from the N-terminus, the 481-residue chain is Arginine biosynthesis bifunctional protein ArgJ, chloroplastic (481 aa).

Substrate is bound by residues threonine 225, lysine 251, threonine 262, glutamate 349, asparagine 476, and threonine 481. The active-site Nucleophile is the threonine 262.

It belongs to the ArgJ family. Heterodimer of an alpha and a beta chain.

The protein resides in the plastid. Its subcellular location is the chloroplast. The catalysed reaction is N(2)-acetyl-L-ornithine + L-glutamate = N-acetyl-L-glutamate + L-ornithine. It catalyses the reaction L-glutamate + acetyl-CoA = N-acetyl-L-glutamate + CoA + H(+). It functions in the pathway amino-acid biosynthesis; L-arginine biosynthesis; L-ornithine and N-acetyl-L-glutamate from L-glutamate and N(2)-acetyl-L-ornithine (cyclic): step 1/1. Its pathway is amino-acid biosynthesis; L-arginine biosynthesis; N(2)-acetyl-L-ornithine from L-glutamate: step 1/4. Functionally, catalyzes two activities which are involved in the cyclic version of arginine biosynthesis: the synthesis of acetylglutamate from glutamate and acetyl-CoA, and of ornithine by transacetylation between acetylornithine and glutamate. In Populus trichocarpa (Western balsam poplar), this protein is Arginine biosynthesis bifunctional protein ArgJ, chloroplastic.